The chain runs to 88 residues: MAIKMRLARAGAKKKPFYQIVIADVRSRRDGRFIENVGTYDPNQNPAAVKFEEGKALEWLGKGAQPTDTVKQMLKTAGLWEKFTTKPA.

This sequence belongs to the bacterial ribosomal protein bS16 family.

In Geobacter metallireducens (strain ATCC 53774 / DSM 7210 / GS-15), this protein is Small ribosomal subunit protein bS16.